A 158-amino-acid polypeptide reads, in one-letter code: Transcription elongation factor GreA (158 aa).

Belongs to the GreA/GreB family.

In terms of biological role, necessary for efficient RNA polymerase transcription elongation past template-encoded arresting sites. The arresting sites in DNA have the property of trapping a certain fraction of elongating RNA polymerases that pass through, resulting in locked ternary complexes. Cleavage of the nascent transcript by cleavage factors such as GreA or GreB allows the resumption of elongation from the new 3'terminus. GreA releases sequences of 2 to 3 nucleotides. The protein is Transcription elongation factor GreA of Verminephrobacter eiseniae (strain EF01-2).